A 356-amino-acid polypeptide reads, in one-letter code: Photosynthetic reaction center cytochrome c subunit (356 aa).

The first 20 residues, 1–20 (MKQLIVNSVATVALASLVAG), serve as a signal peptide directing secretion. Cys-21 is lipidated: S-diacylglycerol cysteine. The heme site is built by Met-94, Cys-107, Cys-110, His-111, Met-130, His-144, Cys-152, Cys-155, His-156, Met-253, Cys-264, Cys-267, His-268, Cys-325, Cys-328, and His-329.

As to quaternary structure, component of the photosynthetic reaction center composed of protein subunits L (PufL), M (PufM), H (PuhA) and cytochrome C (PufC). Post-translationally, binds 4 heme groups per subunit. After the signal sequence is removed, the N-terminal cysteine is modified to form a diacylglyceride thioether, but the alpha-amino group is free and is not N-palmitoylated.

It is found in the cellular chromatophore membrane. The reaction center of purple bacteria contains a tightly bound cytochrome molecule which re-reduces the photo oxidized primary electron donor. This chain is Photosynthetic reaction center cytochrome c subunit, found in Blastochloris viridis (Rhodopseudomonas viridis).